The primary structure comprises 371 residues: Cathepsin L1 (371 aa).

A signal peptide spans 1-48 (MNHLGVFETRFRPRTRHKSQRAQLIPEQITMRTAVLLPLLALLAVAQA). Residues 49 to 153 (VSFADVVMEE…VTFISPAHVT (105 aa)) constitute a propeptide, activation peptide. A glycan (N-linked (GlcNAc...) asparagine) is linked at asparagine 127. 3 disulfide bridges follow: cysteine 175–cysteine 218, cysteine 209–cysteine 251, and cysteine 310–cysteine 360. Cysteine 178 is an active-site residue. Residue histidine 317 is part of the active site. Positions 327 to 329 (DES) are excised as a propeptide. Residue asparagine 338 is part of the active site.

Belongs to the peptidase C1 family. In terms of assembly, dimer of a heavy and a light chain linked by disulfide bonds. In the embryo, predominantly expressed in the midgut. Also expressed in larval alimentary organs such as salivary gland and midgut including gastric caeca.

Its subcellular location is the lysosome. It catalyses the reaction Specificity close to that of papain. As compared to cathepsin B, cathepsin L exhibits higher activity toward protein substrates, but has little activity on Z-Arg-Arg-NHMec, and no peptidyl-dipeptidase activity.. Important for the overall degradation of proteins in lysosomes. Essential for adult male and female fertility. May play a role in digestion. This is Cathepsin L1 from Drosophila melanogaster (Fruit fly).